The primary structure comprises 300 residues: tRNA-cytidine(32) 2-sulfurtransferase (300 aa).

A PP-loop motif motif is present at residues 41 to 46 (SGGKDS). [4Fe-4S] cluster contacts are provided by Cys-116, Cys-119, and Cys-207.

This sequence belongs to the TtcA family. Homodimer. The cofactor is Mg(2+). Requires [4Fe-4S] cluster as cofactor.

The protein resides in the cytoplasm. The enzyme catalyses cytidine(32) in tRNA + S-sulfanyl-L-cysteinyl-[cysteine desulfurase] + AH2 + ATP = 2-thiocytidine(32) in tRNA + L-cysteinyl-[cysteine desulfurase] + A + AMP + diphosphate + H(+). It functions in the pathway tRNA modification. Its function is as follows. Catalyzes the ATP-dependent 2-thiolation of cytidine in position 32 of tRNA, to form 2-thiocytidine (s(2)C32). The sulfur atoms are provided by the cysteine/cysteine desulfurase (IscS) system. This is tRNA-cytidine(32) 2-sulfurtransferase from Idiomarina loihiensis (strain ATCC BAA-735 / DSM 15497 / L2-TR).